The sequence spans 1426 residues: ABC transporter G family member 31 (1426 aa).

N-linked (GlcNAc...) asparagine glycosylation is found at asparagine 6 and asparagine 150. The ABC transporter 1 domain maps to 160 to 434 (LSSLRIIKPR…FESLGFRLPP (275 aa)). Residue 193 to 200 (GPPGSGKS) coordinates ATP. N-linked (GlcNAc...) asparagine glycosylation occurs at asparagine 219. Threonine 276 is subject to Phosphothreonine. The 214-residue stretch at 512-725 (ENLKVCFVRE…GQRAIAVNEF (214 aa)) folds into the ABC transmembrane type-2 1 domain. A run of 6 helical transmembrane segments spans residues 530-550 (FLYT…ATVF), 569-589 (CLFF…PLMI), 618-638 (VPYS…TVGL), 649-669 (MLLL…MASL), 675-695 (IANT…GFVI), and 760-780 (IGIA…TLAL). Positions 826-1078 (MTFHNVNYYV…VLVDYFQGIN (253 aa)) constitute an ABC transporter 2 domain. An N-linked (GlcNAc...) asparagine glycan is attached at asparagine 856. Residue 871 to 878 (GSSGAGKT) coordinates ATP. Residues 1151-1365 (SQFLLCLWKQ…TLQGVILSQL (215 aa)) form the ABC transmembrane type-2 2 domain. Transmembrane regions (helical) follow at residues 1172–1192 (LVRL…FWDI), 1202–1222 (LITV…SNAS), 1258–1278 (IPYI…TIGF), 1285–1305 (FVLY…YGMM), 1315–1335 (LAAV…GFLV), 1342–1362 (VWWI…GVIL), and 1396–1416 (IGVS…AFAL).

The protein belongs to the ABC transporter superfamily. ABCG family. PDR (TC 3.A.1.205) subfamily. As to expression, expressed in seedlings, stems, leaves, siliques and inflorescence. In seeds, confined to the endosperm. Highly expressed in the tapetum of anthers.

Its subcellular location is the cell membrane. It catalyses the reaction abscisate(in) + ATP + H2O = abscisate(out) + ADP + phosphate + H(+). In terms of biological role, together with ABCG25, export abscisic acid (ABA) from the endosperm to deliver it to the embryo via ABCG30 and ABCG40-mediated import to suppress radicle extension and subsequent embryonic growth. Together with ABCG9, involved in pollen coat deposition of steryl glycosides required for pollen fitness. May be a general defense protein. The chain is ABC transporter G family member 31 from Arabidopsis thaliana (Mouse-ear cress).